Reading from the N-terminus, the 464-residue chain is MGKRLLDKLWERHVVTTNENGLDLLYIDLHLVHEVTSPQAFEGLRLTNRTVRRPDLTFATMDHNIPTKDVWNITDRIAKQQLDMLRENCKQFQVPLADIGDEEQGIVHVIGPELGLTQPGKTIVCGDSHTATHGAFGALAFGIGTSEVEHVLATQTLWQRKPKAMGIELKGKLQKGVYAKDIILHLLSKYGVAVGTGYVMEFYGETIGTMEMEERMTLCNMAIEGGAKAGIIAPDEKTFAYVKGRKYAPRDYETFEKKWFELYTDADAIYDLHISIDVTDLAPYVTWGTNPSMGVRIDEKLPEKHDVNDERAFSYMGLIPGQSTYDIPVQHVFIGSCTNSRLSDLEIAASVVKGRKVKEGVRALVVPGSKRVRDAAMQKGLHHIFEEAGFEWREPGCSMCLGMNPDQVPEGEHCASTSNRNFEGRQGKGARTHLVSPAMAAAAALYGHFVDIRKESYDGAISYS.

Residues C337, C397, and C400 each contribute to the [4Fe-4S] cluster site.

Belongs to the aconitase/IPM isomerase family. LeuC type 1 subfamily. Heterodimer of LeuC and LeuD. [4Fe-4S] cluster is required as a cofactor.

The enzyme catalyses (2R,3S)-3-isopropylmalate = (2S)-2-isopropylmalate. It participates in amino-acid biosynthesis; L-leucine biosynthesis; L-leucine from 3-methyl-2-oxobutanoate: step 2/4. Catalyzes the isomerization between 2-isopropylmalate and 3-isopropylmalate, via the formation of 2-isopropylmaleate. In Bacillus cereus (strain AH820), this protein is 3-isopropylmalate dehydratase large subunit.